The following is a 158-amino-acid chain: MNPKDKRVNFGSMEPLIRDIGTVYEFYFDQNTFIESEIKTFLKEFETKRGDRDLYSLSQQTINANNTIVNINRSIHQSSQFLENINNNLNQINSKLSTQVENESIHQEQRNNDRLNKFELELVEKKSIEDSFNQRKSQIENDFNEKASVLRDKYQIVL.

Belongs to the BLOC1S5 family. Component of the biogenesis of lysosome-related organelles complex 1 (BLOC-1).

In terms of biological role, component of the BLOC-1 complex, a complex that is required for normal biogenesis of lysosome-related organelles (LRO). May play a role in intracellular vesicle trafficking. This chain is Biogenesis of lysosome-related organelles complex 1 subunit 5 (bloc1s5), found in Dictyostelium discoideum (Social amoeba).